The sequence spans 257 residues: Acetylglutamate kinase (257 aa).

Substrate is bound by residues 43-44, Arg-65, and Asn-157; that span reads GG. ATP contacts are provided by residues 180–185 and 208–210; these read DISGIL and IIT.

It belongs to the acetylglutamate kinase family. ArgB subfamily. Homodimer.

The protein localises to the cytoplasm. It carries out the reaction N-acetyl-L-glutamate + ATP = N-acetyl-L-glutamyl 5-phosphate + ADP. Its pathway is amino-acid biosynthesis; L-arginine biosynthesis; N(2)-acetyl-L-ornithine from L-glutamate: step 2/4. In terms of biological role, catalyzes the ATP-dependent phosphorylation of N-acetyl-L-glutamate. The polypeptide is Acetylglutamate kinase (Sodalis glossinidius (strain morsitans)).